Reading from the N-terminus, the 729-residue chain is DNA topoisomerase 3 (729 aa).

A Toprim domain is found at 3–136; sequence KKAVLAEKPS…VKRLWISSVT (134 aa). Mg(2+) is bound by residues Glu9 and Asp105. The Topo IA-type catalytic domain maps to 153–590; that stretch reads YETLYAAAAA…EMKEYAKAVV (438 aa). Residues 187–192 form an interaction with DNA region; it reads SCGRVQ. Residue Tyr311 is the O-(5'-phospho-DNA)-tyrosine intermediate of the active site. The segment at 680-708 is disordered; the sequence is FEQRRKQNKHKNVSKREVQSYMKKQNKQD.

This sequence belongs to the type IA topoisomerase family. It depends on Mg(2+) as a cofactor.

The catalysed reaction is ATP-independent breakage of single-stranded DNA, followed by passage and rejoining.. Functionally, releases the supercoiling and torsional tension of DNA, which is introduced during the DNA replication and transcription, by transiently cleaving and rejoining one strand of the DNA duplex. Introduces a single-strand break via transesterification at a target site in duplex DNA. The scissile phosphodiester is attacked by the catalytic tyrosine of the enzyme, resulting in the formation of a DNA-(5'-phosphotyrosyl)-enzyme intermediate and the expulsion of a 3'-OH DNA strand. The free DNA strand then undergoes passage around the unbroken strand, thus removing DNA supercoils. Finally, in the religation step, the DNA 3'-OH attacks the covalent intermediate to expel the active-site tyrosine and restore the DNA phosphodiester backbone. This is DNA topoisomerase 3 from Shouchella clausii (strain KSM-K16) (Alkalihalobacillus clausii).